Consider the following 293-residue polypeptide: Transcriptional regulator ICP22 homolog (293 aa).

Disordered stretches follow at residues 1–49 and 175–293; these read MPHG…QRID and RFLE…SARR. Low complexity predominate over residues 21–31; the sequence is TPSTSPLIPSL. Residues 190-210 are compositionally biased toward acidic residues; the sequence is EECDVSGDESPSEEEEEDEAS. Basic residues predominate over residues 272–281; the sequence is AAKKRRKRQP. Basic and acidic residues predominate over residues 282–293; sequence PKGERPTKSARR.

This sequence belongs to the herpesviridae ICP22 family.

In Equus caballus (Horse), this protein is Transcriptional regulator ICP22 homolog (IR4).